Here is a 450-residue protein sequence, read N- to C-terminus: UDP-N-acetylmuramoylalanine--D-glutamate ligase (450 aa).

119-125 (GSNGKTT) contacts ATP.

The protein belongs to the MurCDEF family.

It is found in the cytoplasm. The enzyme catalyses UDP-N-acetyl-alpha-D-muramoyl-L-alanine + D-glutamate + ATP = UDP-N-acetyl-alpha-D-muramoyl-L-alanyl-D-glutamate + ADP + phosphate + H(+). Its pathway is cell wall biogenesis; peptidoglycan biosynthesis. In terms of biological role, cell wall formation. Catalyzes the addition of glutamate to the nucleotide precursor UDP-N-acetylmuramoyl-L-alanine (UMA). The sequence is that of UDP-N-acetylmuramoylalanine--D-glutamate ligase from Bacillus cereus (strain B4264).